A 104-amino-acid polypeptide reads, in one-letter code: Protein RnfH (104 aa).

Belongs to the UPF0125 (RnfH) family.

The sequence is that of Protein RnfH from Pseudomonas syringae pv. syringae (strain B728a).